A 341-amino-acid chain; its full sequence is Anthranilate phosphoribosyltransferase (341 aa).

Residues G79, 82-83, T87, 89-92, 107-115, and S119 contribute to the 5-phospho-alpha-D-ribose 1-diphosphate site; these read GD, NIST, and KHGNRAVSS. Residue G79 participates in anthranilate binding. S91 provides a ligand contact to Mg(2+). Anthranilate is bound at residue N110. R165 is a binding site for anthranilate. Mg(2+)-binding residues include D224 and E225.

The protein belongs to the anthranilate phosphoribosyltransferase family. As to quaternary structure, homodimer. Mg(2+) serves as cofactor.

It catalyses the reaction N-(5-phospho-beta-D-ribosyl)anthranilate + diphosphate = 5-phospho-alpha-D-ribose 1-diphosphate + anthranilate. It participates in amino-acid biosynthesis; L-tryptophan biosynthesis; L-tryptophan from chorismate: step 2/5. Its function is as follows. Catalyzes the transfer of the phosphoribosyl group of 5-phosphorylribose-1-pyrophosphate (PRPP) to anthranilate to yield N-(5'-phosphoribosyl)-anthranilate (PRA). The polypeptide is Anthranilate phosphoribosyltransferase (Bacillus cereus (strain AH820)).